The sequence spans 1012 residues: Structural polyprotein (1012 aa).

Asp30 lines the a divalent metal cation pocket. Residues 513–755 (ADKGYEVVAN…AGRQYHLAMA (243 aa)) enclose the Peptidase S50 domain. The active-site Nucleophile is Ser652. Lys692 is a catalytic residue. Residues 970 to 1012 (MEMKHRNPRRALPKPKPKPNAPTQRPPGRLGRWIRTVSDEDLE) are disordered. The segment covering 975–986 (RNPRRALPKPKP) has biased composition (basic residues). The interaction with VP1 protein stretch occupies residues 1003-1012 (IRTVSDEDLE).

Homotrimer. A central divalent metal stabilizes the VP2 trimer. Interacts with host ITGA4/ITGB1. In terms of assembly, homodimer. Interacts (via C-terminus) with VP1 in the cytoplasm. Interacts with VP2. Post-translationally, specific enzymatic cleavages yield mature proteins. The capsid assembly seems to be regulated by polyprotein processing. The protease VP4 cleaves itself off the polyprotein, thus releasing pre-VP2 and VP3 within the infected cell. During capsid assembly, the C-terminus of pre-VP2 is further processed by VP4, giving rise to VP2, the external capsid protein and three small peptides that all stay closely associated with the capsid.

The protein localises to the virion. Its subcellular location is the host cytoplasm. Capsid protein VP2 self assembles to form an icosahedral capsid with a T=13 symmetry, about 70 nm in diameter, and consisting of 260 VP2 trimers. The capsid encapsulates the genomic dsRNA. VP2 is also involved in attachment and entry into the host cell by interacting with host ITGA4/ITGB1. Functionally, the precursor of VP2 plays an important role in capsid assembly. First, pre-VP2 and VP2 oligomers assemble to form a procapsid. Then, the pre-VP2 intermediates may be processed into VP2 proteins by proteolytic cleavage mediated by VP4 to obtain the mature virion. The final capsid is composed of pentamers and hexamers but VP2 has a natural tendency to assemble into all-pentameric structures. Therefore pre-VP2 may be required to allow formation of the hexameric structures. Its function is as follows. Protease VP4 is a serine protease that cleaves the polyprotein into its final products. Pre-VP2 is first partially cleaved, and may be completely processed by VP4 upon capsid maturation. In terms of biological role, capsid protein VP3 plays a key role in virion assembly by providing a scaffold for the capsid made of VP2. May self-assemble to form a T=4-like icosahedral inner-capsid composed of at least 180 trimers. Plays a role in genomic RNA packaging by recruiting VP1 into the capsid and interacting with the dsRNA genome segments to form a ribonucleoprotein complex. Additionally, the interaction of the VP3 C-terminal tail with VP1 removes the inherent structural blockade of the polymerase active site. Thus, VP3 can also function as a transcriptional activator. Structural peptide 1 is a small peptide derived from pre-VP2 C-terminus. It destabilizes and perforates cell membranes, suggesting a role during entry. Functionally, structural peptide 2 is a small peptide derived from pVP2 C-terminus. It is not essential for the virus viability, but viral growth is affected when missing. Its function is as follows. Structural peptide 3 is a small peptide derived from pVP2 C-terminus. It is not essential for the virus viability, but viral growth is affected when missing. In terms of biological role, structural peptide 4 is a small peptide derived from pVP2 C-terminus. It is essential for the virus viability. The chain is Structural polyprotein from Avian infectious bursal disease virus (strain Chicken/Cuba/Soroa/1998) (IBDV).